Here is a 273-residue protein sequence, read N- to C-terminus: MCKLEKFNYALFGNPIDHSQSPKIHNFFATQTGILHIYKAINIPLDQFSSVVSDFFKKNIKGANVTAPFKKEAYFFSDKLTERAKIAQSVNTLKKISDKCILGDNTDGIGLLSDLVRLNFIKKNFSILILGAGGAVKGVLLPLLSLGCSVYILNRTILNAKILVKQFNKYGKIFVFDRQNFKQQNFDLVINAMSRNTEKKNFLPLSLITSKTFFYDMNYSTRNTPFINWCSKAGGSFISNGIGMLVFQAAYSFLEWHNVLPEINYIINILNIK.

Residues 19-21 (SQS) and Thr-66 contribute to the shikimate site. The active-site Proton acceptor is Lys-70. Glu-82 is a binding site for NADP(+). Shikimate is bound by residues Asn-91 and Asp-107. NADP(+) is bound by residues 131 to 135 (GAGGA) and Met-217. Residue Tyr-219 coordinates shikimate. Residue Gly-241 participates in NADP(+) binding.

It belongs to the shikimate dehydrogenase family. Homodimer.

It carries out the reaction shikimate + NADP(+) = 3-dehydroshikimate + NADPH + H(+). It participates in metabolic intermediate biosynthesis; chorismate biosynthesis; chorismate from D-erythrose 4-phosphate and phosphoenolpyruvate: step 4/7. Its function is as follows. Involved in the biosynthesis of the chorismate, which leads to the biosynthesis of aromatic amino acids. Catalyzes the reversible NADPH linked reduction of 3-dehydroshikimate (DHSA) to yield shikimate (SA). This chain is Shikimate dehydrogenase (NADP(+)), found in Buchnera aphidicola subsp. Schizaphis graminum (strain Sg).